The following is a 279-amino-acid chain: Digeranylgeranylglyceryl phosphate synthase (279 aa).

Transmembrane regions (helical) follow at residues 27-47 (LIATGTLTPPSLLLAVIVALI), 90-110 (FVGGIAIATLTTTLCLAIAII), 127-147 (VLGNVAVAYLAGSVFLFGGAF), 199-219 (TGIFAFACACGAVAASLLPFG), 222-242 (WGLFYLAGIAVVDLVILFGAF), and 259-279 (TSILRAGMFAALAVFAIAAVI).

Belongs to the UbiA prenyltransferase family. DGGGP synthase subfamily. It depends on Mg(2+) as a cofactor.

The protein localises to the cell membrane. The catalysed reaction is sn-3-O-(geranylgeranyl)glycerol 1-phosphate + (2E,6E,10E)-geranylgeranyl diphosphate = 2,3-bis-O-(geranylgeranyl)-sn-glycerol 1-phosphate + diphosphate. It participates in membrane lipid metabolism; glycerophospholipid metabolism. Its function is as follows. Prenyltransferase that catalyzes the transfer of the geranylgeranyl moiety of geranylgeranyl diphosphate (GGPP) to the C2 hydroxyl of (S)-3-O-geranylgeranylglyceryl phosphate (GGGP). This reaction is the second ether-bond-formation step in the biosynthesis of archaeal membrane lipids. This chain is Digeranylgeranylglyceryl phosphate synthase, found in Methanoculleus marisnigri (strain ATCC 35101 / DSM 1498 / JR1).